The primary structure comprises 256 residues: Thiazole synthase (256 aa).

Lysine 95 (schiff-base intermediate with DXP) is an active-site residue. Residues glycine 156, 182–183 (AG), and 204–205 (NT) contribute to the 1-deoxy-D-xylulose 5-phosphate site.

It belongs to the ThiG family. Homotetramer. Forms heterodimers with either ThiH or ThiS.

Its subcellular location is the cytoplasm. It carries out the reaction [ThiS sulfur-carrier protein]-C-terminal-Gly-aminoethanethioate + 2-iminoacetate + 1-deoxy-D-xylulose 5-phosphate = [ThiS sulfur-carrier protein]-C-terminal Gly-Gly + 2-[(2R,5Z)-2-carboxy-4-methylthiazol-5(2H)-ylidene]ethyl phosphate + 2 H2O + H(+). It functions in the pathway cofactor biosynthesis; thiamine diphosphate biosynthesis. Functionally, catalyzes the rearrangement of 1-deoxy-D-xylulose 5-phosphate (DXP) to produce the thiazole phosphate moiety of thiamine. Sulfur is provided by the thiocarboxylate moiety of the carrier protein ThiS. In vitro, sulfur can be provided by H(2)S. This chain is Thiazole synthase, found in Escherichia coli O8 (strain IAI1).